We begin with the raw amino-acid sequence, 346 residues long: Probable choline kinase 1 (346 aa).

Arginine 73, glutamine 210, and aspartate 227 together coordinate ATP.

It belongs to the choline/ethanolamine kinase family. In terms of tissue distribution, expressed in roots. Expressed at low levels in cauline leaves and flowers.

The enzyme catalyses choline + ATP = phosphocholine + ADP + H(+). It functions in the pathway phospholipid metabolism; phosphatidylcholine biosynthesis; phosphocholine from choline: step 1/1. In terms of biological role, involved in phospholipid biosynthesis. Catalyzes the first step in phosphatidylcholine biosynthesis. In Arabidopsis thaliana (Mouse-ear cress), this protein is Probable choline kinase 1 (CK1).